A 192-amino-acid chain; its full sequence is Xanthine phosphoribosyltransferase 2 (192 aa).

The xanthine site is built by Leu20 and Asn27. 131–135 serves as a coordination point for 5-phospho-alpha-D-ribose 1-diphosphate; that stretch reads ANACA. A xanthine-binding site is contributed by Lys159.

The protein belongs to the purine/pyrimidine phosphoribosyltransferase family. Xpt subfamily. In terms of assembly, homodimer.

The protein localises to the cytoplasm. The enzyme catalyses XMP + diphosphate = xanthine + 5-phospho-alpha-D-ribose 1-diphosphate. It participates in purine metabolism; XMP biosynthesis via salvage pathway; XMP from xanthine: step 1/1. In terms of biological role, converts the preformed base xanthine, a product of nucleic acid breakdown, to xanthosine 5'-monophosphate (XMP), so it can be reused for RNA or DNA synthesis. This Clostridium perfringens (strain ATCC 13124 / DSM 756 / JCM 1290 / NCIMB 6125 / NCTC 8237 / Type A) protein is Xanthine phosphoribosyltransferase 2.